Here is a 91-residue protein sequence, read N- to C-terminus: uncharacterized protein (91 aa).

A run of 3 helical transmembrane segments spans residues 9–29, 30–50, and 67–87; these read LIHAIGGIIFGYLANYVYTAG, LGIFSGIATLIFLFIGAVIFG, and WLGCGVLPFFLVAIVVWVLKF.

It localises to the cell membrane. This is an uncharacterized protein from Methanocaldococcus jannaschii (strain ATCC 43067 / DSM 2661 / JAL-1 / JCM 10045 / NBRC 100440) (Methanococcus jannaschii).